Reading from the N-terminus, the 608-residue chain is MESPVALLLLLLLCLGALAPTPGSASSEAPPLVNEDVKRTVDLSSHLAKVTAEVVLVHPGGGSTSRASSFVLALEPELESRLAHLGVQIKGEDEEDNNLEVRETKIKGKSGRFFTVKLPVALDPGSKISVVVETVYTHVLHPYPTQITQSEKQFVVFEGNHYFYSPYPTKTQTMRVKLASRNVESYTKLGNPSRSEDVLDYGPFKDIPAYSQDTFKVHYENNSPFLTITSMTRVIEVSHWGNIAVEENVDLKHTGAVLKGPFSRYDYQRQPDSGISSIRSFKTILPAAAQDVYYRDEIGNVSTSHLLILDDSVEMEIRPRFPLFGGWKTHYIVGYNLPSYEYLYNLGDQYALKMRFVDHVFDEQVIDSLTVKIILPEGAKNIQVDSPYDISRAPDELHYTYLDTFGRPVIVAYKKNLVEQHIQDIVVHYTFNKVLMLQEPLLVVAAFYILFFTVIIYVRLDFSITKDPAAEARMKVACITEQVLTLVNKRLGLYRHFDETVNRYKQSRDISTLNSGKKSLETEHKAVTSEIAVLQSRLKTEGSDLCDRVSEMQKLDAQVKELVLKSAVEAERLVAGKLKKDTYLENEKLSSGKRQELVTKIDHILDAL.

A signal peptide spans 1–25 (MESPVALLLLLLLCLGALAPTPGSA). The Lumenal portion of the chain corresponds to 26–440 (SSEAPPLVNE…FNKVLMLQEP (415 aa)). Residue Lys188 is modified to N6-acetyllysine. N-linked (GlcNAc...) asparagine glycosylation occurs at Asn300. A helical membrane pass occupies residues 441-458 (LLVVAAFYILFFTVIIYV). The Cytoplasmic segment spans residues 459 to 608 (RLDFSITKDP…TKIDHILDAL (150 aa)). Residue Lys539 is modified to N6-acetyllysine; alternate. A Glycyl lysine isopeptide (Lys-Gly) (interchain with G-Cter in SUMO2); alternate cross-link involves residue Lys539.

The protein belongs to the OST1 family. In terms of assembly, component of the oligosaccharyltransferase (OST) complex. OST exists in two different complex forms which contain common core subunits RPN1, RPN2, OST48, OST4, DAD1 and TMEM258, either STT3A or STT3B as catalytic subunits, and form-specific accessory subunits. STT3A complex assembly occurs through the formation of 3 subcomplexes. Subcomplex 1 contains RPN1 and TMEM258, subcomplex 2 contains the STT3A-specific subunits STT3A, DC2/OSTC, and KCP2 as well as the core subunit OST4, and subcomplex 3 contains RPN2, DAD1, and OST48. The STT3A complex can form stable complexes with the Sec61 complex or with both the Sec61 and TRAP complexes. Interacts with TMEM35A/NACHO. In terms of processing, ubiquitinated by the ECS(ASB11) complex. Ubiquitinated by RNF128, leading to degradation in a proteasome/lysosome-dependent manner. Post-translationally, ufmylated by UFL1 in response to endoplasmic reticulum stress, promoting reticulophagy of endoplasmic reticulum sheets.

The protein resides in the endoplasmic reticulum membrane. It functions in the pathway protein modification; protein glycosylation. Its function is as follows. Subunit of the oligosaccharyl transferase (OST) complex that catalyzes the initial transfer of a defined glycan (Glc(3)Man(9)GlcNAc(2) in eukaryotes) from the lipid carrier dolichol-pyrophosphate to an asparagine residue within an Asn-X-Ser/Thr consensus motif in nascent polypeptide chains, the first step in protein N-glycosylation. N-glycosylation occurs cotranslationally and the complex associates with the Sec61 complex at the channel-forming translocon complex that mediates protein translocation across the endoplasmic reticulum (ER). All subunits are required for a maximal enzyme activity. This is Dolichyl-diphosphooligosaccharide--protein glycosyltransferase subunit 1 from Mus musculus (Mouse).